The following is a 190-amino-acid chain: Large ribosomal subunit protein eL15 (190 aa).

This sequence belongs to the eukaryotic ribosomal protein eL15 family.

This chain is Large ribosomal subunit protein eL15 (rpl15e), found in Nanoarchaeum equitans (strain Kin4-M).